The chain runs to 321 residues: MGTALHETNSSEVHVSEFILLGFPGIHEFQIWLSLPMALLYIVALGANLLILITIYLEPTLHQPMYQFLGILAAVDIGLATTSMPKILAILWFDAKTISLPECFAQIYAIHTFMCMESGVFLCMAIDRYVAICYPLQYPSIVTEAFVIKATLSMLLRNGLLTIPVPVLAAQRQYCSRNEIDHCLCSNLGVISLACDDITVNRFYQLALAWLVVGSDMILVYASYALIIRSVLRLNSTEAASKALSTCSSHLILIMFYYTAIVIVSVTHLAGRRVPLIPVLLNVMHIVIPPSLNPVVYALRTQELKVGFRKVFSLSEFVSRK.

Residues 1–36 lie on the Extracellular side of the membrane; sequence MGTALHETNSSEVHVSEFILLGFPGIHEFQIWLSLP. Residues 37–57 traverse the membrane as a helical segment; that stretch reads MALLYIVALGANLLILITIYL. Residues 58-70 are Cytoplasmic-facing; that stretch reads EPTLHQPMYQFLG. Residues 71–91 form a helical membrane-spanning segment; the sequence is ILAAVDIGLATTSMPKILAIL. At 92–105 the chain is on the extracellular side; the sequence is WFDAKTISLPECFA. Cys-103 and Cys-185 are joined by a disulfide. The helical transmembrane segment at 106–126 threads the bilayer; that stretch reads QIYAIHTFMCMESGVFLCMAI. Over 127 to 128 the chain is Cytoplasmic; sequence DR. A helical transmembrane segment spans residues 129-149; that stretch reads YVAICYPLQYPSIVTEAFVIK. The Extracellular segment spans residues 150–207; the sequence is ATLSMLLRNGLLTIPVPVLAAQRQYCSRNEIDHCLCSNLGVISLACDDITVNRFYQLA. Residues 208–228 traverse the membrane as a helical segment; that stretch reads LAWLVVGSDMILVYASYALII. The Cytoplasmic portion of the chain corresponds to 229-250; the sequence is RSVLRLNSTEAASKALSTCSSH. Residues 251–271 traverse the membrane as a helical segment; the sequence is LILIMFYYTAIVIVSVTHLAG. The Extracellular segment spans residues 272–275; that stretch reads RRVP. A helical membrane pass occupies residues 276 to 296; it reads LIPVLLNVMHIVIPPSLNPVV. Residues 297 to 321 lie on the Cytoplasmic side of the membrane; it reads YALRTQELKVGFRKVFSLSEFVSRK.

It belongs to the G-protein coupled receptor 1 family.

The protein localises to the cell membrane. Odorant receptor. This chain is Olfactory receptor 56B34, found in Mus musculus (Mouse).